A 443-amino-acid chain; its full sequence is MDDLVLARSLFGTTMGFHIIFATLGVGLPLMILVAELIYQKTKDDHYAIMAKRWTKAQAVLLGVAIPTGTIAGTQLALLWPGFMEVIGRVMSLPFQIEIYAFFVEALFMSIYVYAADRLSPAMRIVAVFFVLVGAAASAVLITNVHAFEGTPAGFKILNGKITDVDPWAAFFNPSFFITAGHVVLSAFMTGAFIVASVAAYKMIRTRKKERVYRFHRKALLLALTIGGIFSLLTALNGHESAQMLYEYQPEKLAGAEGLFETRSHAPLAIGGFTDPNEEKVKWAIEIPWALSFLAANRFDTVVKGLNAFPRDEWPPLFIHTLFNAMVGVGMLLILYSIIGVVWRKVLKKDRFPTWLLIIFMTAGPFSLIGIEFGWIFACTGRQPWVIYHLLKTSDVVTTTGSIGVLFLFFTFVYAVLGAAVVYVLLYYFRKHPVDEDLNTAES.

Transmembrane regions (helical) follow at residues 19–39, 60–80, 93–113, 125–145, 176–196, 219–239, 322–342, 357–377, and 405–425; these read IIFA…ELIY, VLLG…ALLW, LPFQ…SIYV, IVAV…ITNV, FFIT…FIVA, ALLL…LNGH, LFNA…IGVV, LIIF…GWIF, and VLFL…VYVL. His182 contacts heme b.

The protein belongs to the cytochrome ubiquinol oxidase subunit 1 family. The cofactor is heme b.

The protein localises to the cell membrane. In terms of biological role, may have a role in sporulation. Can compensate for the loss of cytochrome aa3. In Bacillus subtilis (strain 168), this protein is Putative cytochrome bd menaquinol oxidase subunit I (ythA).